Here is a 416-residue protein sequence, read N- to C-terminus: Ferrochelatase, mitochondrial (416 aa).

A mitochondrion-targeting transit peptide spans 1–47 (MAAALRSAGVLLRDRLLYGGSRACQPRRCQSGAATAAAATETAQRAR). Residues 41–62 (ETAQRARSPKPQAQPGNRKPRT) are disordered. Position 50 is an N6-acetyllysine (Lys50). Arg108, Tyr116, and Ser123 together coordinate protoporphyrin IX. Lys131 carries the N6-succinyllysine modification. Cys189 provides a ligand contact to [2Fe-2S] cluster. His223 is a catalytic residue. N6-acetyllysine; alternate is present on Lys283. Residue Lys283 is modified to N6-succinyllysine; alternate. Asp376 is a catalytic residue. The [2Fe-2S] cluster site is built by Cys396, Cys399, and Cys404. The residue at position 408 (Lys408) is an N6-acetyllysine; alternate. Lys408 is modified (N6-succinyllysine; alternate).

Belongs to the ferrochelatase family. As to quaternary structure, homodimer. Homotetramer. Interaction with PGRMC1; the interaction results in decreased FECH activity. Interacts with ABCB10 and SLC25A37; this interaction forms an oligomeric complex. Forms a complex with ABCB7 and ABCB10, where a dimeric FECH bridges ABCB7 and ABCB10 homodimers; this complex may be required for cellular iron homeostasis, mitochondrial function and heme biosynthesis. Interacts with ABCB7 and ABCB10. [2Fe-2S] cluster serves as cofactor.

Its subcellular location is the mitochondrion inner membrane. It catalyses the reaction heme b + 2 H(+) = protoporphyrin IX + Fe(2+). Its pathway is porphyrin-containing compound metabolism; protoheme biosynthesis; protoheme from protoporphyrin-IX: step 1/1. Functionally, catalyzes the ferrous insertion into protoporphyrin IX and participates in the terminal step in the heme biosynthetic pathway. The sequence is that of Ferrochelatase, mitochondrial from Bos taurus (Bovine).